Here is a 364-residue protein sequence, read N- to C-terminus: tRNA-specific 2-thiouridylase MnmA 1 (364 aa).

ATP is bound by residues 10–17 (GMSGGVDS) and Met36. Cys106 functions as the Nucleophile in the catalytic mechanism. Cysteines 106 and 204 form a disulfide. Gly130 lines the ATP pocket. The tract at residues 154–156 (KDQ) is interaction with tRNA. Cys204 (cysteine persulfide intermediate) is an active-site residue. The interval 310-311 (RY) is interaction with tRNA.

This sequence belongs to the MnmA/TRMU family.

The protein localises to the cytoplasm. The enzyme catalyses S-sulfanyl-L-cysteinyl-[protein] + uridine(34) in tRNA + AH2 + ATP = 2-thiouridine(34) in tRNA + L-cysteinyl-[protein] + A + AMP + diphosphate + H(+). Functionally, catalyzes the 2-thiolation of uridine at the wobble position (U34) of tRNA, leading to the formation of s(2)U34. This chain is tRNA-specific 2-thiouridylase MnmA 1, found in Caldanaerobacter subterraneus subsp. tengcongensis (strain DSM 15242 / JCM 11007 / NBRC 100824 / MB4) (Thermoanaerobacter tengcongensis).